The chain runs to 901 residues: MLGIGNLAKLVFGTPNDRKVKSARPLVAQVNALEEQFRALSDADLIGKTRELQGRAQSGEDLDKLLPEAFANCREAARRALGLRAFDTQLMGGIFLHQGNIAEMKTGEGKTLVATFPAYLNALAGKGVHVVTVNDYLAKRDAHWMGKVFAQLGMTTGVVYPFQDDAEKREAYRADVTYATNNELGFDYLRDNMKGSIEQMTQRGHFFAIVDEVDSILIDEARTPLIISGPSQDRSELYKTLDAFMPELAPEHYKLDEKARNATFTEEGNEFLEKRLQAAGILPEGQTLYDPESTTIVHHANQAMRAHKLFMRDQHYIVRDDEVVLIDEFTGRMMKGRRLSDGLHQAIEAKEGVSIQPENVTLASVTFQNYFRLYDKLSGMTGTAATEAEEFAEIYKLGVVEVPTNRPVQRIDEHDRVYRTATEKYAAVIEAIKEAHAKGQPILVGTTSIEKSEMLSQMLTKEGIQHNVLNARQHEQEAKIVADAGKLGAVTIATNMAGRGTDIQLGGNVEMKVMEALAADPEANPDEVRARIEAEHAAEKQAVLDAGGLFVLATERHESRRIDNQLRGRSGRQGDPGRSLFFLSLEDDLMRIFGSERLDKVLSTLGMKEGEAIVHPWVNKSLERAQAKVEGRNFDIRKQLLKFDDVMNDQRKAIFSQRLEIMHTEEVGDIAADMRAQVIDDLIDRHLPPRAYAEQWDVKGLHDAVIDRLNMDLPITDWAGEDGVDQDTIRERIQQATDAYMAQKAEQFGPENMRQIEKQVLLQQIDSKWREHLVTLEHLRSVVGFRGYAQRDPLSEYKTEGFQLFETMLDGLRFDVTQQLARIRPLTDAEREQMLREYQQQQAETEAQMHPEHEEAEGGEVSGRVAGFDETDPTTWGNPSRNDPCPCGSGKKFKHCHGVLA.

Residues Q89, 107-111, and D502 contribute to the ATP site; that span reads GEGKT. The tract at residues 838 to 883 is disordered; that stretch reads YQQQQAETEAQMHPEHEEAEGGEVSGRVAGFDETDPTTWGNPSRND. C885, C887, C896, and H897 together coordinate Zn(2+).

This sequence belongs to the SecA family. In terms of assembly, monomer and homodimer. Part of the essential Sec protein translocation apparatus which comprises SecA, SecYEG and auxiliary proteins SecDF-YajC and YidC. Zn(2+) serves as cofactor.

It localises to the cell inner membrane. The protein resides in the cytoplasm. The enzyme catalyses ATP + H2O + cellular proteinSide 1 = ADP + phosphate + cellular proteinSide 2.. Part of the Sec protein translocase complex. Interacts with the SecYEG preprotein conducting channel. Has a central role in coupling the hydrolysis of ATP to the transfer of proteins into and across the cell membrane, serving both as a receptor for the preprotein-SecB complex and as an ATP-driven molecular motor driving the stepwise translocation of polypeptide chains across the membrane. The sequence is that of Protein translocase subunit SecA from Paracoccus denitrificans (strain Pd 1222).